Reading from the N-terminus, the 504-residue chain is Maturase K (504 aa).

The protein belongs to the intron maturase 2 family. MatK subfamily.

The protein resides in the plastid. Its subcellular location is the chloroplast. Its function is as follows. Usually encoded in the trnK tRNA gene intron. Probably assists in splicing its own and other chloroplast group II introns. This is Maturase K from Nepenthes alata (Winged pitcher plant).